A 477-amino-acid polypeptide reads, in one-letter code: Adenosylhomocysteinase (477 aa).

Substrate-binding residues include Thr-63, Asp-142, and Glu-202. Residue 203–205 coordinates NAD(+); the sequence is TTT. The substrate site is built by Lys-232 and Asp-236. NAD(+) contacts are provided by residues Asn-237, 266 to 271, Glu-289, Asn-324, 345 to 347, and Asn-390; these read GYGDVG and IGH.

Belongs to the adenosylhomocysteinase family. It depends on NAD(+) as a cofactor.

Its subcellular location is the cytoplasm. The catalysed reaction is S-adenosyl-L-homocysteine + H2O = L-homocysteine + adenosine. The protein operates within amino-acid biosynthesis; L-homocysteine biosynthesis; L-homocysteine from S-adenosyl-L-homocysteine: step 1/1. May play a key role in the regulation of the intracellular concentration of adenosylhomocysteine. The sequence is that of Adenosylhomocysteinase from Methylibium petroleiphilum (strain ATCC BAA-1232 / LMG 22953 / PM1).